The following is a 29-amino-acid chain: Trypsin inhibitor 5 (29 aa).

3 disulfides stabilise this stretch: Cys3/Cys20, Cys10/Cys22, and Cys16/Cys28.

The protein belongs to the protease inhibitor I7 (squash-type serine protease inhibitor) family.

The protein localises to the secreted. Strongly inhibits trypsin, weakly inhibits chymotrypsin. The sequence is that of Trypsin inhibitor 5 from Cyclanthera pedata (Achocha).